A 474-amino-acid polypeptide reads, in one-letter code: 3-isopropylmalate dehydratase large subunit (474 aa).

Cys355, Cys415, and Cys418 together coordinate [4Fe-4S] cluster.

The protein belongs to the aconitase/IPM isomerase family. LeuC type 1 subfamily. As to quaternary structure, heterodimer of LeuC and LeuD. [4Fe-4S] cluster serves as cofactor.

The catalysed reaction is (2R,3S)-3-isopropylmalate = (2S)-2-isopropylmalate. The protein operates within amino-acid biosynthesis; L-leucine biosynthesis; L-leucine from 3-methyl-2-oxobutanoate: step 2/4. Catalyzes the isomerization between 2-isopropylmalate and 3-isopropylmalate, via the formation of 2-isopropylmaleate. The chain is 3-isopropylmalate dehydratase large subunit from Shewanella oneidensis (strain ATCC 700550 / JCM 31522 / CIP 106686 / LMG 19005 / NCIMB 14063 / MR-1).